The sequence spans 467 residues: Na(+)-translocating NADH-quinone reductase subunit A (467 aa).

This sequence belongs to the NqrA family. As to quaternary structure, composed of six subunits; NqrA, NqrB, NqrC, NqrD, NqrE and NqrF.

It carries out the reaction a ubiquinone + n Na(+)(in) + NADH + H(+) = a ubiquinol + n Na(+)(out) + NAD(+). In terms of biological role, NQR complex catalyzes the reduction of ubiquinone-1 to ubiquinol by two successive reactions, coupled with the transport of Na(+) ions from the cytoplasm to the periplasm. NqrA to NqrE are probably involved in the second step, the conversion of ubisemiquinone to ubiquinol. The chain is Na(+)-translocating NADH-quinone reductase subunit A from Chlamydia pneumoniae (Chlamydophila pneumoniae).